A 433-amino-acid chain; its full sequence is Phosphomethylpyrimidine synthase (433 aa).

Substrate-binding positions include asparagine 68, methionine 97, tyrosine 126, histidine 162, 184–186 (SRG), 225–228 (DALR), and glutamate 264. Histidine 268 serves as a coordination point for Zn(2+). Tyrosine 291 contacts substrate. Histidine 332 is a binding site for Zn(2+). [4Fe-4S] cluster-binding residues include cysteine 408, cysteine 411, and cysteine 415.

This sequence belongs to the ThiC family. The cofactor is [4Fe-4S] cluster.

It catalyses the reaction 5-amino-1-(5-phospho-beta-D-ribosyl)imidazole + S-adenosyl-L-methionine = 4-amino-2-methyl-5-(phosphooxymethyl)pyrimidine + CO + 5'-deoxyadenosine + formate + L-methionine + 3 H(+). It participates in cofactor biosynthesis; thiamine diphosphate biosynthesis. Catalyzes the synthesis of the hydroxymethylpyrimidine phosphate (HMP-P) moiety of thiamine from aminoimidazole ribotide (AIR) in a radical S-adenosyl-L-methionine (SAM)-dependent reaction. In Fusobacterium nucleatum subsp. nucleatum (strain ATCC 25586 / DSM 15643 / BCRC 10681 / CIP 101130 / JCM 8532 / KCTC 2640 / LMG 13131 / VPI 4355), this protein is Phosphomethylpyrimidine synthase.